An 880-amino-acid chain; its full sequence is Alanine--tRNA ligase (880 aa).

Residues histidine 565, histidine 569, cysteine 675, and histidine 679 each coordinate Zn(2+).

Belongs to the class-II aminoacyl-tRNA synthetase family. Zn(2+) serves as cofactor.

It localises to the cytoplasm. It carries out the reaction tRNA(Ala) + L-alanine + ATP = L-alanyl-tRNA(Ala) + AMP + diphosphate. Functionally, catalyzes the attachment of alanine to tRNA(Ala) in a two-step reaction: alanine is first activated by ATP to form Ala-AMP and then transferred to the acceptor end of tRNA(Ala). Also edits incorrectly charged Ser-tRNA(Ala) and Gly-tRNA(Ala) via its editing domain. The polypeptide is Alanine--tRNA ligase (Granulibacter bethesdensis (strain ATCC BAA-1260 / CGDNIH1)).